The following is a 349-amino-acid chain: 1-acylglycerol-3-phosphate O-acyltransferase ABHD5 (349 aa).

Alanine 2 carries the post-translational modification N-acetylalanine. An AB hydrolase-1 domain is found at 77–185 (PLVLLHGFGG…VEPWGFPERP (109 aa)). Positions 327–332 (HYVYAD) match the HXXXXD motif motif.

It belongs to the peptidase S33 family. ABHD4/ABHD5 subfamily. In terms of assembly, interacts with ADRP, PLIN and PNPLA2. Interacts with PLIN5; promotes interaction with PNPLA2.

It is found in the cytoplasm. The protein localises to the lipid droplet. It carries out the reaction a 1-acyl-sn-glycero-3-phosphate + an acyl-CoA = a 1,2-diacyl-sn-glycero-3-phosphate + CoA. The catalysed reaction is 1-(9Z-octadecenoyl)-sn-glycero-3-phosphate + (9Z)-octadecenoyl-CoA = 1,2-di-(9Z-octadecenoyl)-sn-glycero-3-phosphate + CoA. The enzyme catalyses 1-(9Z-octadecenoyl)-sn-glycero-3-phosphate + hexadecanoyl-CoA = 1-(9Z)-octadecenoyl-2-hexadecanoyl-sn-glycero-3-phosphate + CoA. It catalyses the reaction 1-(9Z-octadecenoyl)-sn-glycero-3-phosphate + octadecanoyl-CoA = 1-(9Z-octadecenoyl)-2-octadecanoyl-sn-glycero-3-phosphate + CoA. It carries out the reaction 1-(9Z-octadecenoyl)-sn-glycero-3-phosphate + (5Z,8Z,11Z,14Z)-eicosatetraenoyl-CoA = 1-(9Z)-octadecenoyl-2-(5Z,8Z,11Z,14Z)-eicosatetraenoyl-sn-glycero-3-phosphate + CoA. The catalysed reaction is eicosanoyl-CoA + 1-(9Z-octadecenoyl)-sn-glycero-3-phosphate = 1-(9Z)-octadecenoyl-2-eicosanoyl-sn-glycero-3-phosphate + CoA. The enzyme catalyses 1-hexadecanoyl-sn-glycero-3-phosphate + (9Z)-octadecenoyl-CoA = 1-hexadecanoyl-2-(9Z-octadecenoyl)-sn-glycero-3-phosphate + CoA. It catalyses the reaction 1-octadecanoyl-sn-glycero-3-phosphate + (9Z)-octadecenoyl-CoA = 1-octadecanoyl-2-(9Z-octadecenoyl)-sn-glycero-3-phosphate + CoA. It carries out the reaction 1-(5Z,8Z,11Z,14Z-eicosatetraenoyl)-sn-glycero-3-phosphate + (9Z)-octadecenoyl-CoA = 1-(5Z,8Z,11Z,14Z)-eicosatetraenoyl-2-(9Z)-octadecenoyl-sn-glycero-3-phosphate + CoA. Acyltransferase activity is inhibited by detergents such as Triton X-100 and 3-[(3-cholamidopropyl)dimethylammonio]-1-propanesulfonate (CHAPS). Acyltransferase activity is inhibited by the presence of magnesium and calcium. Functionally, coenzyme A-dependent lysophosphatidic acid acyltransferase that catalyzes the transfer of an acyl group on a lysophosphatidic acid. Functions preferentially with 1-oleoyl-lysophosphatidic acid followed by 1-palmitoyl-lysophosphatidic acid, 1-stearoyl-lysophosphatidic acid and 1-arachidonoyl-lysophosphatidic acid as lipid acceptor. Functions preferentially with arachidonoyl-CoA followed by oleoyl-CoA as acyl group donors. Functions in phosphatidic acid biosynthesis. May regulate the cellular storage of triacylglycerol through activation of the phospholipase PNPLA2. Involved in keratinocyte differentiation. Regulates lipid droplet fusion. This chain is 1-acylglycerol-3-phosphate O-acyltransferase ABHD5, found in Sus scrofa (Pig).